A 1427-amino-acid chain; its full sequence is ATP-binding cassette transporter abc1 (1427 aa).

The chain crosses the membrane as a helical span at residues 26–46; sequence LLLFYLSLFSLTNLFLIQKLF. N-linked (GlcNAc...) asparagine glycosylation occurs at asparagine 49. 9 consecutive transmembrane segments (helical) span residues 63 to 83, 87 to 107, 115 to 135, 155 to 175, 197 to 217, 262 to 282, 298 to 318, 345 to 367, and 397 to 417; these read CLLEYIQIILSIVSAALSFYL, AVWWAIRTITHLEIVGLNILS, LFSWISVANAFGLLLLRLISI, LLLPLAYNITLFLLVIIPLFF, CSIFSLIFTYGWLNGIIWKSW, ILLMVFLSVLVSSTLFVTPLA, GNSPFLWVFVLLIGPYLASVV, VLTSKTLFVAVDGSKINLDYVYN, and MYFLYQLLGWSAYVGLLLAIL. Residues 262 to 549 form the ABC transmembrane type-1 1 domain; it reads ILLMVFLSVL…LASVSRQFIQ (288 aa). Residue asparagine 437 is glycosylated (N-linked (GlcNAc...) asparagine). Transmembrane regions (helical) follow at residues 489-509 and 513-533; these read IIFKSGMKIAPFISMFITFAI and IMGHQLTPATAFTSISMFGLL. N-linked (GlcNAc...) asparagine glycosylation is found at asparagine 567, asparagine 581, and asparagine 601. The 229-residue stretch at 579 to 807 folds into the ABC transporter 1 domain; sequence FENTSLSWSP…PSTFFSSNTK (229 aa). The chain crosses the membrane as a helical span at residues 609–629; that stretch reads FTLVVGSTGSGKSTLAMALLG. 614–621 provides a ligand contact to ATP; that stretch reads GSTGSGKS. Residues asparagine 658 and asparagine 703 are each glycosylated (N-linked (GlcNAc...) asparagine). A helical transmembrane segment spans residues 760-780; the sequence is IILFTHNVSLCLPIAENVIVL. 2 N-linked (GlcNAc...) asparagine glycosylation sites follow: asparagine 782 and asparagine 842. An ABC transmembrane type-1 2 domain is found at 862–1142; that stretch reads ILGSILLVMM…FVRANNEILT (281 aa). Helical transmembrane passes span 866–886, 896–916, and 973–993; these read ILLVMMSQVSLASIHFWIALW, LPSSFSFLWGYAILLFIYFLM, and LLWASLEGMLLCVMAILITML. Asparagine 994 carries N-linked (GlcNAc...) asparagine glycosylation. A run of 3 helical transmembrane segments spans residues 995-1015, 1086-1106, and 1114-1134; these read VTLVMPIFMVPAAFVSLLVYL, LAIRTDGISGLVGFSTGLIAL, and GLVGFSLNSAIGFNISVLVFV. N-linked (GlcNAc...) asparagine glycosylation is found at asparagine 1161 and asparagine 1184. The ABC transporter 2 domain maps to 1180 to 1422; it reads VSIKNLTVSY…RRAFWKMCKE (243 aa). 1214–1221 is a binding site for ATP; sequence GRTGSGKS. Residues 1223 to 1243 form a helical membrane-spanning segment; the sequence is MGLTLLRFTMIMSGAVEVDGI. Asparagine 1324 carries an N-linked (GlcNAc...) asparagine glycan.

This sequence belongs to the ABC transporter superfamily. ABCC family. Conjugate transporter (TC 3.A.1.208) subfamily.

Its subcellular location is the membrane. The sequence is that of ATP-binding cassette transporter abc1 (abc1) from Schizosaccharomyces pombe (strain 972 / ATCC 24843) (Fission yeast).